A 75-amino-acid chain; its full sequence is Large ribosomal subunit protein bL31 (75 aa).

Cysteine 16, cysteine 18, cysteine 38, and cysteine 41 together coordinate Zn(2+).

This sequence belongs to the bacterial ribosomal protein bL31 family. Type A subfamily. Part of the 50S ribosomal subunit. Requires Zn(2+) as cofactor.

Functionally, binds the 23S rRNA. The polypeptide is Large ribosomal subunit protein bL31 (Nocardioides sp. (strain ATCC BAA-499 / JS614)).